The sequence spans 261 residues: Sepiapterin reductase (261 aa).

Position 1 is an N-acetylmethionine (Met-1). An NADP(+)-binding site is contributed by 14–20 (GASRGFG). At Ser-32 the chain carries Phosphoserine. NADP(+) is bound by residues 42 to 43 (RN) and 69 to 70 (DL). A Phosphoserine modification is found at Ser-103. Substrate-binding positions include 157–158 (SL) and Tyr-170. Lys-174 provides a ligand contact to NADP(+). Gly-199 contributes to the substrate binding site. 201–206 (LDTDMQ) contacts NADP(+). At Ser-213 the chain carries Phosphoserine; by CaMK2; in vitro. Position 257 (Asp-257) interacts with substrate.

Belongs to the sepiapterin reductase family. As to quaternary structure, homodimer. In terms of processing, in vitro phosphorylation of Ser-213 by CaMK2 does not change kinetic parameters.

The protein localises to the cytoplasm. It catalyses the reaction L-erythro-7,8-dihydrobiopterin + NADP(+) = L-sepiapterin + NADPH + H(+). The enzyme catalyses (6R)-L-erythro-5,6,7,8-tetrahydrobiopterin + 2 NADP(+) = 6-pyruvoyl-5,6,7,8-tetrahydropterin + 2 NADPH + 2 H(+). Its function is as follows. Catalyzes the final one or two reductions in tetra-hydrobiopterin biosynthesis to form 5,6,7,8-tetrahydrobiopterin. The protein is Sepiapterin reductase (SPR) of Homo sapiens (Human).